A 340-amino-acid chain; its full sequence is MYG1 protein C27H6.8 (340 aa).

It belongs to the MYG1 family.

The chain is MYG1 protein C27H6.8 from Caenorhabditis elegans.